A 162-amino-acid chain; its full sequence is NADH-quinone oxidoreductase subunit I (162 aa).

2 4Fe-4S ferredoxin-type domains span residues 54 to 83 (RRYENGEERCIACKLCEVVCPALAITINST) and 93 to 122 (SSYEIDLFKCIFCGYCEESCPVDSIVETNI). [4Fe-4S] cluster-binding residues include cysteine 63, cysteine 66, cysteine 69, cysteine 73, cysteine 102, cysteine 105, cysteine 108, and cysteine 112.

Belongs to the complex I 23 kDa subunit family. NDH-1 is composed of 14 different subunits. Subunits NuoA, H, J, K, L, M, N constitute the membrane sector of the complex. [4Fe-4S] cluster serves as cofactor.

Its subcellular location is the cell inner membrane. The catalysed reaction is a quinone + NADH + 5 H(+)(in) = a quinol + NAD(+) + 4 H(+)(out). Functionally, NDH-1 shuttles electrons from NADH, via FMN and iron-sulfur (Fe-S) centers, to quinones in the respiratory chain. The immediate electron acceptor for the enzyme in this species is believed to be ubiquinone. Couples the redox reaction to proton translocation (for every two electrons transferred, four hydrogen ions are translocated across the cytoplasmic membrane), and thus conserves the redox energy in a proton gradient. This is NADH-quinone oxidoreductase subunit I from Francisella philomiragia subsp. philomiragia (strain ATCC 25017 / CCUG 19701 / FSC 153 / O#319-036).